The sequence spans 448 residues: Adenylosuccinate synthetase (448 aa).

Residues 22–28 (GDEGKGK) and 50–52 (GHT) each bind GTP. Asp23 functions as the Proton acceptor in the catalytic mechanism. 2 residues coordinate Mg(2+): Asp23 and Gly50. Residues 23-26 (DEGK), 48-51 (NAGH), Thr139, Arg153, Gln234, Thr249, and Arg321 each bind IMP. The active-site Proton donor is His51. Residue 317–323 (SVTGRPR) participates in substrate binding. Residues Arg323, 349–351 (KLD), and 431–433 (STG) contribute to the GTP site.

Belongs to the adenylosuccinate synthetase family. Homodimer. It depends on Mg(2+) as a cofactor.

The protein resides in the cytoplasm. It catalyses the reaction IMP + L-aspartate + GTP = N(6)-(1,2-dicarboxyethyl)-AMP + GDP + phosphate + 2 H(+). Its pathway is purine metabolism; AMP biosynthesis via de novo pathway; AMP from IMP: step 1/2. Functionally, plays an important role in the de novo pathway of purine nucleotide biosynthesis. Catalyzes the first committed step in the biosynthesis of AMP from IMP. The polypeptide is Adenylosuccinate synthetase (Paraburkholderia xenovorans (strain LB400)).